Consider the following 445-residue polypeptide: UDP-N-acetylglucosamine--peptide N-acetylglucosaminyltransferase stabilizing protein GtfB (445 aa).

A glycosyltransferase 1 region spans residues 55–171 (KPLYFNQVPV…TLPGQSMRYF (117 aa)).

The protein belongs to the GtfB family. As to quaternary structure, interacts with glycosyltransferase GtfA; probably forms a heterotetramer with 2 subunits each of GtfA and GtfB. Part of the accessory SecA2/SecY2 protein translocation apparatus.

The protein localises to the cell membrane. The protein operates within protein modification; protein glycosylation. Its function is as follows. Required for the polymorphic O-glycosylation of the serine-rich repeat protein PsrP. A stabilizing protein that is part of the accessory SecA2/SecY2 system specifically required to export serine-rich repeat cell wall proteins encoded upstream in the same operon. The GtfA-GtfB complex adds GlcNAc from UDP-GlcNAc to PsrP, attaching the first sugar residue. Stabilizes the glycosylation activity of GtfA. Has no N-acetylglucosaminyl transferase activity on its own. The sequence is that of UDP-N-acetylglucosamine--peptide N-acetylglucosaminyltransferase stabilizing protein GtfB from Streptococcus pneumoniae serotype 4 (strain ATCC BAA-334 / TIGR4).